A 444-amino-acid polypeptide reads, in one-letter code: 3-isopropylmalate dehydratase large subunit (444 aa).

[4Fe-4S] cluster is bound by residues Xaa348, Cys408, and Xaa411. The disordered stretch occupies residues Glu423–His444.

This sequence belongs to the aconitase/IPM isomerase family. LeuC type 1 subfamily. Heterodimer of LeuC and LeuD. [4Fe-4S] cluster is required as a cofactor.

It catalyses the reaction (2R,3S)-3-isopropylmalate = (2S)-2-isopropylmalate. The protein operates within amino-acid biosynthesis; L-leucine biosynthesis; L-leucine from 3-methyl-2-oxobutanoate: step 2/4. Catalyzes the isomerization between 2-isopropylmalate and 3-isopropylmalate, via the formation of 2-isopropylmaleate. In Buchnera aphidicola subsp. Uroleucon rudbeckiae, this protein is 3-isopropylmalate dehydratase large subunit.